The chain runs to 284 residues: Nucleotide-binding protein TTE1834 (284 aa).

8–15 serves as a coordination point for ATP; sequence GLSGAGKT. GTP is bound at residue 58–61; it reads DLRG.

This sequence belongs to the RapZ-like family.

Its function is as follows. Displays ATPase and GTPase activities. This is Nucleotide-binding protein TTE1834 from Caldanaerobacter subterraneus subsp. tengcongensis (strain DSM 15242 / JCM 11007 / NBRC 100824 / MB4) (Thermoanaerobacter tengcongensis).